We begin with the raw amino-acid sequence, 213 residues long: Kiwellin (213 aa).

An N-terminal signal peptide occupies residues 1–24 (MAQLSLLVLSLFLTLISLPPPGAS). Intrachain disulfides connect C28–C60, C32–C44, and C38–C49. P65 and P67 each carry 4-hydroxyproline. 4 disulfides stabilise this stretch: C72/C90, C80/C172, C119/C144, and C166/C182. The tract at residues 91–121 (SPPVTSSTPAKLTNNDFSEGGDGGGPSECDE) is disordered. A compositionally biased stretch (polar residues) spans 93–107 (PVTSSTPAKLTNNDF).

This sequence belongs to the kiwellin family. In terms of processing, undergoes proteolytic cleavage by actinidin to produce kissper and KiTH. Three forms of KiTH are produced by cleavage at different sites.

It is found in the secreted. Its function is as follows. Kissper is an anion-selective pore-forming peptide. In Actinidia chinensis var. chinensis (Chinese soft-hair kiwi), this protein is Kiwellin.